Reading from the N-terminus, the 912-residue chain is Vomeronasal type-2 receptor 1 (912 aa).

The first 21 residues, 1 to 21 (MASRQISLALGFLAFLWAVLG), serve as a signal peptide directing secretion. Topologically, residues 22–623 (AQNKTEEVQC…LAYGEALGFT (602 aa)) are extracellular. Residues asparagine 24, asparagine 38, asparagine 299, and asparagine 386 are each glycosylated (N-linked (GlcNAc...) asparagine). Residues 624-644 (LVILSIFGALVVLAVTVVYVI) traverse the membrane as a helical segment. The Cytoplasmic segment spans residues 645-657 (HRHTPLVKANDRE). Residues 658 to 678 (LSFLIQMSLVITVLSSLLFIG) form a helical membrane-spanning segment. The Extracellular segment spans residues 679 to 691 (KPCNWSCMARQIT). Residues 692 to 712 (LALGFCLCLSSILGKTISLFF) form a helical membrane-spanning segment. Topologically, residues 713-732 (AYRISVSKTRLISMHPIFRK) are cytoplasmic. A helical membrane pass occupies residues 733–753 (LIVLVCVVGEIGVCAAYLVLE). Over 754-778 (PPRMFKNIEIQNVKIIFECNEGSVE) the chain is Extracellular. The chain crosses the membrane as a helical span at residues 779-799 (FLCSIFGFDVLRALLCFLTTF). Residues 800–812 (VARQLPDNYYEGK) lie on the Cytoplasmic side of the membrane. A helical transmembrane segment spans residues 813–833 (CITFGMLVFFIVWISFVPAYL). Over 834 to 840 (STKGKFK) the chain is Extracellular. A helical membrane pass occupies residues 841–861 (VAVEIFAILASSYGLLGCLFL). Topologically, residues 862–912 (PKCFIILLRPKRNTDETVGGRVPTVDRSIQLTSASVSSELNSTTVSTVLDE) are cytoplasmic.

This sequence belongs to the G-protein coupled receptor 3 family. In terms of tissue distribution, expressed at the sensory surface of the vomeronasal organ.

Its subcellular location is the cell membrane. In terms of biological role, putative pheromone receptor. In Mus musculus (Mouse), this protein is Vomeronasal type-2 receptor 1 (Vmn2r1).